Here is a 75-residue protein sequence, read N- to C-terminus: Kappa-thalatoxin-Tas2a (75 aa).

An N-terminal signal peptide occupies residues 1–22 (MKFQMIAAVLLIAFCLSVVVTA). Positions 23–40 (RMELQDDEEMKNGSFQKR) are excised as a propeptide. The ShKT domain occupies 43 to 75 (CIDTIPKSRCTAFQCKHSMKYRLSFCRKTCGTC). 3 disulfides stabilise this stretch: C43–C75, C52–C68, and C57–C72.

Belongs to the sea anemone type 1 potassium channel toxin family. Type 1a subfamily.

The protein resides in the secreted. It is found in the nematocyst. In terms of biological role, inhibits voltage-gated potassium channels (Kv) with higher potency for Kv1.1/KCNA1 and Kv1.3/KCNA3 (IC(50)=3.4 nM). The chain is Kappa-thalatoxin-Tas2a from Thalassianthus aster (Fuzzy-tipped anemone).